We begin with the raw amino-acid sequence, 112 residues long: DNA-directed RNA polymerases I and III subunit RPAC2 (112 aa).

The protein belongs to the archaeal Rpo11/eukaryotic RPB11/RPC19 RNA polymerase subunit family. Component of the RNA polymerase I (Pol I) and RNA polymerase III (Pol III) complexes consisting of at least 13 and 17 subunits, respectively.

It localises to the nucleus. In terms of biological role, DNA-dependent RNA polymerase catalyzes the transcription of DNA into RNA using the four ribonucleoside triphosphates as substrates. Common core component of RNA polymerases I and III which synthesize ribosomal RNA precursors and small RNAs, such as 5S rRNA and tRNAs, respectively. The protein is DNA-directed RNA polymerases I and III subunit RPAC2 (polr1d) of Danio rerio (Zebrafish).